We begin with the raw amino-acid sequence, 694 residues long: Zinc finger BED domain-containing protein 5 (694 aa).

The segment at 109–165 (RKYDESYLSFGFTYFGNRDAPHAQCVLCKKILSNSSLAPSKLRRHLETKHAAYKDKD) adopts a BED-type zinc-finger fold. Cys133, Cys136, His153, and His158 together coordinate Zn(2+).

In Canis lupus familiaris (Dog), this protein is Zinc finger BED domain-containing protein 5 (ZBED5).